The sequence spans 527 residues: Glucose-6-phosphate isomerase (527 aa).

The active-site Proton donor is E323. Residues H352 and K454 contribute to the active site.

Belongs to the GPI family.

It is found in the cytoplasm. It catalyses the reaction alpha-D-glucose 6-phosphate = beta-D-fructose 6-phosphate. Its pathway is carbohydrate biosynthesis; gluconeogenesis. The protein operates within carbohydrate degradation; glycolysis; D-glyceraldehyde 3-phosphate and glycerone phosphate from D-glucose: step 2/4. In terms of biological role, catalyzes the reversible isomerization of glucose-6-phosphate to fructose-6-phosphate. The chain is Glucose-6-phosphate isomerase from Prochlorococcus marinus (strain MIT 9301).